A 206-amino-acid polypeptide reads, in one-letter code: Ras-related protein Rab-14 (206 aa).

Residue 15–22 (GDMGVGKS) coordinates GTP. The short motif at 37 to 45 (SPHTIGVEF) is the Effector region element. Residues 63–67 (DTAGQ) and 121–124 (NKKD) contribute to the GTP site. The segment at 182–206 (PDGGITKNPPQTITDKPQDASKCSC) is disordered. A compositionally biased stretch (polar residues) spans 189-206 (NPPQTITDKPQDASKCSC). 2 S-geranylgeranyl cysteine lipidation sites follow: C204 and C206. Residue C206 is modified to Cysteine methyl ester.

Belongs to the small GTPase superfamily. Rab family.

The protein resides in the endosome. The protein localises to the contractile vacuole. It is found in the membrane. The enzyme catalyses GTP + H2O = GDP + phosphate + H(+). With respect to regulation, rab activation is generally mediated by a guanine exchange factor (GEF), while inactivation through hydrolysis of bound GTP is catalyzed by a GTPase activating protein (GAP). That Rab is activated by the DENND6A and DENND6B guanine exchange factors (GEF). Its function is as follows. The small GTPases Rab are key regulators of intracellular membrane trafficking, from the formation of transport vesicles to their fusion with membranes. Rabs cycle between an inactive GDP-bound form and an active GTP-bound form that is able to recruit to membranes different set of downstream effectors directly responsible for vesicle formation, movement, tethering and fusion. Regulates the fusion of phagosomes and lysosomes. The protein is Ras-related protein Rab-14 (rab14) of Dictyostelium discoideum (Social amoeba).